Reading from the N-terminus, the 203-residue chain is ATP-dependent Clp protease proteolytic subunit (203 aa).

Ser-107 functions as the Nucleophile in the catalytic mechanism. The active site involves His-132.

The protein belongs to the peptidase S14 family. As to quaternary structure, fourteen ClpP subunits assemble into 2 heptameric rings which stack back to back to give a disk-like structure with a central cavity, resembling the structure of eukaryotic proteasomes.

The protein resides in the cytoplasm. It carries out the reaction Hydrolysis of proteins to small peptides in the presence of ATP and magnesium. alpha-casein is the usual test substrate. In the absence of ATP, only oligopeptides shorter than five residues are hydrolyzed (such as succinyl-Leu-Tyr-|-NHMec, and Leu-Tyr-Leu-|-Tyr-Trp, in which cleavage of the -Tyr-|-Leu- and -Tyr-|-Trp bonds also occurs).. Functionally, cleaves peptides in various proteins in a process that requires ATP hydrolysis. Has a chymotrypsin-like activity. Plays a major role in the degradation of misfolded proteins. This Thermotoga maritima (strain ATCC 43589 / DSM 3109 / JCM 10099 / NBRC 100826 / MSB8) protein is ATP-dependent Clp protease proteolytic subunit.